The chain runs to 53 residues: UPF0391 membrane protein Patl_1732 (53 aa).

The next 2 membrane-spanning stretches (helical) occupy residues 4-24 (WAVI…GGIA) and 28-48 (AGIA…SVVM).

The protein belongs to the UPF0391 family.

The protein resides in the cell membrane. The polypeptide is UPF0391 membrane protein Patl_1732 (Pseudoalteromonas atlantica (strain T6c / ATCC BAA-1087)).